Reading from the N-terminus, the 184-residue chain is Mitochondrial import inner membrane translocase subunit TIM22 (184 aa).

The segment at Met-1–Ala-26 is disordered. 2 cysteine pairs are disulfide-bonded: Cys-40/Cys-118 and Cys-137/Cys-156. The next 2 membrane-spanning stretches (helical) occupy residues Val-45–Met-65 and Ala-151–Asn-171.

The protein belongs to the Tim17/Tim22/Tim23 family. In terms of assembly, component of the TIM22 complex, whose core is composed of TIM22 and TIM54, associated with the 70 kDa heterohexamer composed of TIM9 and TIM10 (or TIM8 and TIM13).

It localises to the mitochondrion inner membrane. Its function is as follows. Essential core component of the TIM22 complex, a complex that mediates the import and insertion of multi-pass transmembrane proteins into the mitochondrial inner membrane. In the TIM22 complex, it constitutes the voltage-activated and signal-gated channel. Forms a twin-pore translocase that uses the membrane potential as external driving force in 2 voltage-dependent steps. In Candida albicans (strain SC5314 / ATCC MYA-2876) (Yeast), this protein is Mitochondrial import inner membrane translocase subunit TIM22.